The sequence spans 95 residues: Acylphosphatase (95 aa).

An Acylphosphatase-like domain is found at 7–93 (TWQLFAHGRV…QLFDRFDWLP (87 aa)). Active-site residues include R22 and N40.

Belongs to the acylphosphatase family.

The enzyme catalyses an acyl phosphate + H2O = a carboxylate + phosphate + H(+). The protein is Acylphosphatase (acyP) of Cupriavidus metallidurans (strain ATCC 43123 / DSM 2839 / NBRC 102507 / CH34) (Ralstonia metallidurans).